A 320-amino-acid polypeptide reads, in one-letter code: Olfactory receptor 52W1 (320 aa).

Topologically, residues 1-30 (MAETLQLNSTFLHPNFFILTGFPGLGSAQT) are extracellular. Asparagine 8 carries N-linked (GlcNAc...) asparagine glycosylation. A helical membrane pass occupies residues 31-51 (WLTLVFGPIYLLALLGNGALP). Residues 52 to 59 (AVVWIDST) lie on the Cytoplasmic side of the membrane. The chain crosses the membrane as a helical span at residues 60–80 (LHQPMFLLLAILAATDLGLAT). The Extracellular portion of the chain corresponds to 81-104 (SIAPGLLAVLWLGPRSVPYAVCLV). The chain crosses the membrane as a helical span at residues 105-125 (QMFFVHALTAMESGVLLAMAC). The Cytoplasmic portion of the chain corresponds to 126–144 (DRAAAIGRPLHYPVLVTKA). A helical membrane pass occupies residues 145–165 (CVGYAALALALKAVAIVVPFP). The Extracellular portion of the chain corresponds to 166 to 201 (LLVAKFEHFQAKTIGHTYCAHMAVVELVVGNTQATN). Residues 202–222 (LYGLALSLAISGMDILGITGS) traverse the membrane as a helical segment. Residues 223-242 (YGLIAHAVLQLPTREAHAKA) are Cytoplasmic-facing. A helical membrane pass occupies residues 243–263 (FGTCSSHICVILAFYIPGLFS). The Extracellular portion of the chain corresponds to 264-279 (YLTHRFGHHTVPKPVH). The helical transmembrane segment at 280 to 300 (ILLSNIYLLLPPALNPLIYGA) threads the bilayer. Topologically, residues 301–320 (RTKQIRDRLLETFTFRKSPL) are cytoplasmic.

This sequence belongs to the G-protein coupled receptor 1 family.

It is found in the cell membrane. In terms of biological role, odorant receptor. In Homo sapiens (Human), this protein is Olfactory receptor 52W1 (OR52W1).